A 61-amino-acid chain; its full sequence is uncharacterized protein (61 aa).

The disordered stretch occupies residues 36 to 61 (RLTDVPPQPNSPPDNVFNPDQPRMGP).

Belongs to the ART2/RRT15 family.

This is an uncharacterized protein from Saccharomyces cerevisiae (strain ATCC 204508 / S288c) (Baker's yeast).